The chain runs to 329 residues: Holliday junction branch migration complex subunit RuvB (329 aa).

A large ATPase domain (RuvB-L) region spans residues 1–180; sequence MKNILQSTEC…FGIPIHLEFY (180 aa). Residues Ile19, Arg20, Gly61, Lys64, Thr65, Thr66, 127–129, Arg170, Tyr180, and Arg217 contribute to the ATP site; that span reads EDF. Thr65 is a Mg(2+) binding site. The small ATPAse domain (RuvB-S) stretch occupies residues 181-252; sequence STEELIKVIQ…FADKALLRLG (72 aa). Residues 255–329 form a head domain (RuvB-H) region; sequence KLGLDRQDIQ…ISYLKEQSYI (75 aa). Arg308 and Arg313 together coordinate DNA.

It belongs to the RuvB family. As to quaternary structure, homohexamer. Forms an RuvA(8)-RuvB(12)-Holliday junction (HJ) complex. HJ DNA is sandwiched between 2 RuvA tetramers; dsDNA enters through RuvA and exits via RuvB. An RuvB hexamer assembles on each DNA strand where it exits the tetramer. Each RuvB hexamer is contacted by two RuvA subunits (via domain III) on 2 adjacent RuvB subunits; this complex drives branch migration. In the full resolvosome a probable DNA-RuvA(4)-RuvB(12)-RuvC(2) complex forms which resolves the HJ.

The protein localises to the cytoplasm. The catalysed reaction is ATP + H2O = ADP + phosphate + H(+). Its function is as follows. The RuvA-RuvB-RuvC complex processes Holliday junction (HJ) DNA during genetic recombination and DNA repair, while the RuvA-RuvB complex plays an important role in the rescue of blocked DNA replication forks via replication fork reversal (RFR). RuvA specifically binds to HJ cruciform DNA, conferring on it an open structure. The RuvB hexamer acts as an ATP-dependent pump, pulling dsDNA into and through the RuvAB complex. RuvB forms 2 homohexamers on either side of HJ DNA bound by 1 or 2 RuvA tetramers; 4 subunits per hexamer contact DNA at a time. Coordinated motions by a converter formed by DNA-disengaged RuvB subunits stimulates ATP hydrolysis and nucleotide exchange. Immobilization of the converter enables RuvB to convert the ATP-contained energy into a lever motion, pulling 2 nucleotides of DNA out of the RuvA tetramer per ATP hydrolyzed, thus driving DNA branch migration. The RuvB motors rotate together with the DNA substrate, which together with the progressing nucleotide cycle form the mechanistic basis for DNA recombination by continuous HJ branch migration. Branch migration allows RuvC to scan DNA until it finds its consensus sequence, where it cleaves and resolves cruciform DNA. This chain is Holliday junction branch migration complex subunit RuvB, found in Ehrlichia canis (strain Jake).